The following is a 705-amino-acid chain: Putative membrane protein SCO6666 (705 aa).

Transmembrane regions (helical) follow at residues 16 to 36 (VMLLWGLFLLLGFGLGTGVFG), 144 to 164 (LHGIDGSAVSGVHVSGGPLLG), 177 to 197 (NAELISLPVVLVLLLVVFGGL), 201 to 221 (GLPLLVAVAGIAGAFLALFGF), 232 to 252 (IQVTTMLGLGLAVDYALLMLV), 280 to 300 (LFSGLTVAVSLAGLLVFPSTF), 306 to 326 (LAVAAVVVVDMLAALTLLPAL), 360 to 380 (VAVLAVAVPALLVVALPVTGM), 504 to 524 (ALTVLTGIFVLLFAFTGSVLL), 528 to 548 (TVATTLLSLGAALGAVVWVFQ), 561 to 581 (LGALSLTAPPLIIAIAFGLAM), 615 to 635 (VVTCAALLLAVVFGAFMTGGF), and 636 to 656 (SPILQIGLGLTLAVLIDATVV).

It belongs to the resistance-nodulation-cell division (RND) (TC 2.A.6) family. MmpL subfamily.

The protein localises to the cell membrane. This Streptomyces coelicolor (strain ATCC BAA-471 / A3(2) / M145) protein is Putative membrane protein SCO6666.